The sequence spans 276 residues: Formamidopyrimidine-DNA glycosylase (276 aa).

The Schiff-base intermediate with DNA role is filled by Pro-2. The Proton donor role is filled by Glu-3. Lys-58 functions as the Proton donor; for beta-elimination activity in the catalytic mechanism. Residues His-92, Arg-111, and Lys-154 each coordinate DNA. The segment at 239-273 adopts an FPG-type zinc-finger fold; it reads QVYGHAGEECSSCGTILEKIKVNGRGTTFCPHCQV. Arg-263 (proton donor; for delta-elimination activity) is an active-site residue.

Belongs to the FPG family. As to quaternary structure, monomer. Zn(2+) serves as cofactor.

The catalysed reaction is Hydrolysis of DNA containing ring-opened 7-methylguanine residues, releasing 2,6-diamino-4-hydroxy-5-(N-methyl)formamidopyrimidine.. It catalyses the reaction 2'-deoxyribonucleotide-(2'-deoxyribose 5'-phosphate)-2'-deoxyribonucleotide-DNA = a 3'-end 2'-deoxyribonucleotide-(2,3-dehydro-2,3-deoxyribose 5'-phosphate)-DNA + a 5'-end 5'-phospho-2'-deoxyribonucleoside-DNA + H(+). Involved in base excision repair of DNA damaged by oxidation or by mutagenic agents. Acts as a DNA glycosylase that recognizes and removes damaged bases. Has a preference for oxidized purines, such as 7,8-dihydro-8-oxoguanine (8-oxoG). Has AP (apurinic/apyrimidinic) lyase activity and introduces nicks in the DNA strand. Cleaves the DNA backbone by beta-delta elimination to generate a single-strand break at the site of the removed base with both 3'- and 5'-phosphates. The chain is Formamidopyrimidine-DNA glycosylase from Lactobacillus gasseri (strain ATCC 33323 / DSM 20243 / BCRC 14619 / CIP 102991 / JCM 1131 / KCTC 3163 / NCIMB 11718 / NCTC 13722 / AM63).